A 528-amino-acid polypeptide reads, in one-letter code: Phosphoenolpyruvate carboxykinase (ATP) (528 aa).

Residues Arg54, Tyr190, and Lys196 each contribute to the substrate site. Residues Lys196, His215, and 231-239 (GLSGTGKTT) each bind ATP. Mn(2+)-binding residues include Lys196 and His215. Residue Asp252 participates in Mn(2+) binding. Residues Glu280, Arg316, and Thr441 each coordinate ATP. Residue Arg316 coordinates substrate.

The protein belongs to the phosphoenolpyruvate carboxykinase (ATP) family. Requires Mn(2+) as cofactor.

The protein localises to the cytoplasm. The catalysed reaction is oxaloacetate + ATP = phosphoenolpyruvate + ADP + CO2. It participates in carbohydrate biosynthesis; gluconeogenesis. In terms of biological role, involved in the gluconeogenesis. Catalyzes the conversion of oxaloacetate (OAA) to phosphoenolpyruvate (PEP) through direct phosphoryl transfer between the nucleoside triphosphate and OAA. This is Phosphoenolpyruvate carboxykinase (ATP) from Sulfurimonas denitrificans (strain ATCC 33889 / DSM 1251) (Thiomicrospira denitrificans (strain ATCC 33889 / DSM 1251)).